A 353-amino-acid polypeptide reads, in one-letter code: Ion-translocating oxidoreductase complex subunit D (353 aa).

Helical transmembrane passes span 20 to 39 (LMRL…WYFF), 68 to 88 (PISH…LGIC), and 129 to 149 (VMLL…LTLV). The residue at position 187 (Thr-187) is an FMN phosphoryl threonine. 4 helical membrane passes run 215 to 235 (LALG…FLIS), 238 to 258 (AIAW…SFIG), 267 to 287 (ASTM…FILT), and 300 to 320 (IIVG…GGYP).

It belongs to the NqrB/RnfD family. The complex is composed of six subunits: RnfA, RnfB, RnfC, RnfD, RnfE and RnfG. FMN is required as a cofactor.

The protein localises to the cell inner membrane. In terms of biological role, part of a membrane-bound complex that couples electron transfer with translocation of ions across the membrane. This chain is Ion-translocating oxidoreductase complex subunit D, found in Colwellia psychrerythraea (strain 34H / ATCC BAA-681) (Vibrio psychroerythus).